A 252-amino-acid polypeptide reads, in one-letter code: TGEKPFTCNECGKFFSCTSWLNVHLRSHTGEKPFTCSECGKFFSCMSRLKVHFRGHTGEKPSACTECEKCFSSISQRNIHIRSHTGDKSYTCTVCGKIFTRISQFNVHVRSHTGEKPFKCTECGKSFICNSQLNLHLRFHTGEKLTTCSECGKCFTHTSHLNVHFRVHTGEKPFTCTECGKCLTRQYQLTEHSYLHKGEKPYTCTECGKCFTRRYHLTEHSYLHTGEKPFTCTECGKGFTRRSHLKAHSHTH.

9 consecutive C2H2-type zinc fingers follow at residues 6–28, 34–56, 62–84, 90–112, 118–140, 146–168, 174–196, 202–224, and 230–252; these read FTCN…LRSH, FTCS…FRGH, SACT…IRSH, YTCT…VRSH, FKCT…LRFH, TTCS…FRVH, FTCT…SYLH, YTCT…SYLH, and FTCT…SHTH.

Belongs to the krueppel C2H2-type zinc-finger protein family.

It is found in the nucleus. Its function is as follows. May be involved in transcriptional regulation. This Xenopus laevis (African clawed frog) protein is Gastrula zinc finger protein XlCGF28.1.